The sequence spans 679 residues: Cysteine-rich receptor-like protein kinase 29 (679 aa).

A signal peptide spans 1–23; sequence MEHVRVIFFFACFLTLAPFHAFA. The Extracellular segment spans residues 24 to 286; the sequence is QVDSYEFDPD…RTGKGKGGSK (263 aa). Gnk2-homologous domains lie at 30 to 134 and 140 to 249; these read FDPD…NRTI and TNPT…TWRF. Residues N41, N45, N71, N107, N131, and N187 are each glycosylated (N-linked (GlcNAc...) asparagine). Positions 260 to 281 are disordered; the sequence is PPAIQPADSPQSAARTERTGKG. Residues 287-307 traverse the membrane as a helical segment; sequence VIIAIVIPILLVALLAICLCL. Residues 308–679 lie on the Cytoplasmic side of the membrane; sequence VLKWRKNKSG…DVTVSEFSPR (372 aa). The Protein kinase domain maps to 357–637; sequence FSSENELGRG…SLMLNSYSFT (281 aa). Residues 363 to 371 and K385 each bind ATP; that span reads LGRGGFGSV. The residue at position 430 (Y430) is a Phosphotyrosine. The Proton acceptor role is filled by D482. A Phosphoserine modification is found at S486. A Phosphothreonine modification is found at T524. At Y532 the chain carries Phosphotyrosine. Positions 659-679 are disordered; it reads SSTEGLQMSSNDVTVSEFSPR.

The protein belongs to the protein kinase superfamily. Ser/Thr protein kinase family. CRK subfamily.

Its subcellular location is the membrane. It carries out the reaction L-seryl-[protein] + ATP = O-phospho-L-seryl-[protein] + ADP + H(+). The enzyme catalyses L-threonyl-[protein] + ATP = O-phospho-L-threonyl-[protein] + ADP + H(+). The chain is Cysteine-rich receptor-like protein kinase 29 (CRK29) from Arabidopsis thaliana (Mouse-ear cress).